The primary structure comprises 1085 residues: Protein CROWDED NUCLEI 3 (1085 aa).

Coiled coils occupy residues 51 to 149 and 185 to 695; these read DEAS…NDLK and RERA…LDVL. Lysine 318 participates in a covalent cross-link: Glycyl lysine isopeptide (Lys-Gly) (interchain with G-Cter in ubiquitin). A Nuclear localization signal motif is present at residues 404-411; the sequence is AKREAALE. A Glycyl lysine isopeptide (Lys-Gly) (interchain with G-Cter in ubiquitin) cross-link involves residue lysine 661. A phosphoserine mark is found at serine 764, serine 787, serine 825, and serine 843. Disordered regions lie at residues 801–997 and 1020–1077; these read TVKL…GKAE and NNTG…SIGK. Residues 813 to 825 show a composition bias toward basic and acidic residues; that stretch reads SLDRVSGEDHEPS. The span at 854–868 shows a compositional bias: basic residues; sequence RRGRGRGRGRGKSVR. The span at 877-897 shows a compositional bias: basic and acidic residues; sequence VSRDSKPSDGETPRKRQREQT. Serine 910 carries the post-translational modification Phosphoserine. Residues 932-941 show a composition bias toward polar residues; the sequence is VSQTPGQTRY. Over residues 949-995 the composition is skewed to basic and acidic residues; sequence VGTEEDKAQASKGATEKQERVNDDIRKVPSPKETRTPPEGENRENGK. The span at 1045 to 1066 shows a compositional bias: acidic residues; it reads EEDDENISMIEEENEGEEEEET.

The protein belongs to the CRWN family. As to quaternary structure, core component of the LINC complex which is composed of inner nuclear membrane SUN domain-containing proteins coupled to outer nuclear membrane WIP proteins, the nucleoskeletal CRWN/LINC proteins, and, possibly, KAKU4. As to expression, expressed at low levels in roots, leaves, flowers and flower stalks.

It localises to the nucleus membrane. The protein resides in the nucleus. It is found in the nucleoplasm. The protein localises to the cytoplasm. Its subcellular location is the nucleus lamina. Functionally, component of SUN-protein-containing multivariate complexes also called LINC complexes which link the nucleoskeleton and cytoskeleton by providing versatile outer nuclear membrane attachment sites for cytoskeletal filaments. Required for nucleus structure organization (e.g. size and shape). The chain is Protein CROWDED NUCLEI 3 from Arabidopsis thaliana (Mouse-ear cress).